The chain runs to 292 residues: G1/S-specific cyclin-D3 (292 aa).

A Cyclin N-terminal domain is found at 27 to 152 (VLQSLLRLEE…LVLGKLKWDL (126 aa)). The tract at residues 255-292 (LREAAQTSPSPAPKAPRGSSSQGPSQTSTPTDVTAIHL) is disordered. 2 positions are modified to phosphoserine: Ser-264 and Ser-279. The segment covering 272–285 (GSSSQGPSQTSTPT) has biased composition (low complexity). At Thr-283 the chain carries Phosphothreonine.

It belongs to the cyclin family. Cyclin D subfamily. Interacts with the CDK4 and CDK6 protein kinases to form a serine/threonine kinase holoenzyme complex. The cyclin subunit imparts substrate specificity to the complex. Interacts with ATF5. Interacts with EIF3K. Component of the ternary complex cyclin D/CDK4/CDKN1B required for nuclear translocation and modulation of CDK4-mediated kinase activity. Can form similar complexes with either CDKN1A or CDKN2A. Post-translationally, phosphorylation at Thr-283 by MAP kinases is required for ubiquitination and degradation by the DCX(AMBRA1) complex. Ubiquitinated by the DCX(AMBRA1) complex during the transition from G1 to S cell phase, leading to its degradation: ubiquitination is dependent on Thr-283 phosphorylation. The DCX(AMBRA1) complex represents the major regulator of CCND3 stability during the G1/S transition. Polyubiquitinated by the SCF(FBXL2) complex, leading to proteasomal degradation.

It localises to the nucleus. It is found in the cytoplasm. In terms of biological role, regulatory component of the cyclin D3-CDK4 (DC) complex that phosphorylates and inhibits members of the retinoblastoma (RB) protein family including RB1 and regulates the cell-cycle during G(1)/S transition. Phosphorylation of RB1 allows dissociation of the transcription factor E2F from the RB/E2F complex and the subsequent transcription of E2F target genes which are responsible for the progression through the G(1) phase. Hypophosphorylates RB1 in early G(1) phase. Cyclin D-CDK4 complexes are major integrators of various mitogenenic and antimitogenic signals. Component of the ternary complex, cyclin D3/CDK4/CDKN1B, required for nuclear translocation and activity of the cyclin D-CDK4 complex. Shows transcriptional coactivator activity with ATF5 independently of CDK4. In Bos taurus (Bovine), this protein is G1/S-specific cyclin-D3 (CCND3).